The chain runs to 274 residues: 2,3,4,5-tetrahydropyridine-2,6-dicarboxylate N-succinyltransferase (274 aa).

Belongs to the transferase hexapeptide repeat family.

The protein resides in the cytoplasm. The enzyme catalyses (S)-2,3,4,5-tetrahydrodipicolinate + succinyl-CoA + H2O = (S)-2-succinylamino-6-oxoheptanedioate + CoA. Its pathway is amino-acid biosynthesis; L-lysine biosynthesis via DAP pathway; LL-2,6-diaminopimelate from (S)-tetrahydrodipicolinate (succinylase route): step 1/3. In Salmonella agona (strain SL483), this protein is 2,3,4,5-tetrahydropyridine-2,6-dicarboxylate N-succinyltransferase.